A 200-amino-acid polypeptide reads, in one-letter code: Inducible T-cell costimulator (200 aa).

Residues 1–20 (MKPYFCRVFVFCFLIRLLTG) form the signal peptide. The Extracellular segment spans residues 21 to 144 (EINGSADHRM…QLCCQLKLWL (124 aa)). N-linked (GlcNAc...) asparagine glycosylation occurs at N23. In terms of domain architecture, Ig-like V-type spans 30 to 133 (MFSFHNGGVQ…LSGGYLHIYE (104 aa)). 2 cysteine pairs are disulfide-bonded: C42–C109 and C63–C83. N-linked (GlcNAc...) asparagine glycosylation is found at N89 and N123. A helical transmembrane segment spans residues 145–165 (PVGCAAFVVVLLFGCILIIWF). At 166–200 (SKKKYGSSVHDPNSEYMFMAAVNTNKKSRLAGVTS) the chain is on the cytoplasmic side.

As to quaternary structure, homodimer; disulfide-linked. Interacts with ICOSLG. Interacts with PIK3R1. Interacts with TBK1; this interaction is critical for the maturation of T follicular regulatory cells. Post-translationally, N-glycosylated. In terms of tissue distribution, expressed on activated T-cells and resting memory T-cells. High expression seen in the thymic medulla and in the germinal centers and T-cell zones of lymph nodes and Peyer patches. Expressed at low levels in the spleen.

The protein localises to the cell membrane. Stimulatory receptor expressed in activated or antigen-experienced T-cells that plays an important role in the immune response. Upon binding to its ligand ICOSL expressed on antigen presenting cells (APCs), delivers costimulatory signals that enhances all basic T-cell responses to a foreign antigen, namely proliferation, secretion of lymphokines including IL10, up-regulation of molecules that mediate cell-cell interaction, and effective help for antibody secretion by B-cells. Also acts as a costimulatory receptor critical for the differentiation of T follicular regulatory cells upon immune challenges such as viral infection. Mechanistically, potentiates TCR-induced calcium flux by augmenting PLCG1 activation and actin remodeling. In addition, activates PI3K signaling pathways independently of calcium flux. Essential both for efficient interaction between T and B-cells and for normal antibody responses to T-cell dependent antigens. Prevents the apoptosis of pre-activated T-cells. Plays a critical role in CD40-mediated class switching of immunoglobin isotypes. In Mus musculus (Mouse), this protein is Inducible T-cell costimulator (Icos).